The following is a 142-amino-acid chain: DNA-directed RNA polymerase II subunit RPB4 (142 aa).

Belongs to the eukaryotic RPB4 RNA polymerase subunit family. Component of the RNA polymerase II (Pol II) core complex consisting of 12 subunits: a ten-subunit catalytic core composed of POLR2A/RPB1, POLR2B/RPB2, POLR2C/RPB3, POLR2I/RPB9, POLR2J/RPB11, POLR2E/RPABC1, POLR2F/RPABC2, POLR2H/RPABC3, POLR2K/RPABC4 and POLR2L/RPABC5 and a mobile stalk composed of two subunits POLR2D/RPB4 and POLR2G/RPB7, protruding from the core and functioning primarily in transcription initiation. Part of Pol II(G) complex, in which Pol II core associates with an additional subunit POLR2M; unlike conventional Pol II, Pol II(G) functions as a transcriptional repressor. Part of TBP-based Pol II pre-initiation complex (PIC), in which Pol II core assembles with general transcription factors and other specific initiation factors including GTF2E1, GTF2E2, GTF2F1, GTF2F2, TCEA1, ERCC2, ERCC3, GTF2H2, GTF2H3, GTF2H4, GTF2H5, GTF2A1, GTF2A2, GTF2B and TBP; this large multi-subunit PIC complex mediates DNA unwinding and targets Pol II core to the transcription start site where the first phosphodiester bond forms.

It is found in the nucleus. Functionally, core component of RNA polymerase II (Pol II), a DNA-dependent RNA polymerase which synthesizes mRNA precursors and many functional non-coding RNAs using the four ribonucleoside triphosphates as substrates. Pol II is the central component of the basal RNA polymerase II transcription machinery. It is composed of mobile elements that move relative to each other. POLR2D/RPB4 is part of a subcomplex with POLR2G/RPB7 that binds to a pocket formed by POLR2A/RPB1, POLR2B/RPB2 and POLR2F/RPABC2 at the base of the clamp element. The POLR2D/RPB4-POLR2G/RPB7 subcomplex seems to lock the clamp via POLR2G/RPB7 in the closed conformation thus preventing double-stranded DNA to enter the active site cleft. The POLR2D/RPB4-POLR2G/RPB7 subcomplex binds single-stranded DNA and RNA. In Homo sapiens (Human), this protein is DNA-directed RNA polymerase II subunit RPB4 (POLR2D).